The chain runs to 212 residues: Small ribosomal subunit protein uS5 (212 aa).

In terms of domain architecture, S5 DRBM spans 48–111 (LEDEVLDINM…DIAKLNIIDV (64 aa)).

This sequence belongs to the universal ribosomal protein uS5 family. Part of the 30S ribosomal subunit. Contacts protein S4.

With S4 and S12 plays an important role in translational accuracy. This Haloarcula marismortui (strain ATCC 43049 / DSM 3752 / JCM 8966 / VKM B-1809) (Halobacterium marismortui) protein is Small ribosomal subunit protein uS5.